Reading from the N-terminus, the 709-residue chain is Polyribonucleotide nucleotidyltransferase (709 aa).

Mg(2+)-binding residues include Asp-487 and Asp-493. One can recognise a KH domain in the interval 554–613 (PRIHTMKISVEKIKDVIGKGGAVIRQLTEETGTTIEIEDDGTIKIAATDGDQAKEAIRRI). In terms of domain architecture, S1 motif spans 623–691 (GVIYTGKVAR…RQGRVRLSMK (69 aa)).

This sequence belongs to the polyribonucleotide nucleotidyltransferase family. In terms of assembly, component of the RNA degradosome, which is a multiprotein complex involved in RNA processing and mRNA degradation. It depends on Mg(2+) as a cofactor.

It is found in the cytoplasm. The catalysed reaction is RNA(n+1) + phosphate = RNA(n) + a ribonucleoside 5'-diphosphate. Involved in mRNA degradation. Catalyzes the phosphorolysis of single-stranded polyribonucleotides processively in the 3'- to 5'-direction. The polypeptide is Polyribonucleotide nucleotidyltransferase (Vibrio cholerae serotype O1 (strain ATCC 39315 / El Tor Inaba N16961)).